The chain runs to 461 residues: Sensor histidine kinase MctS (461 aa).

2 helical membrane passes run 7–27 and 203–223; these read IIAL…TFIT and FVIV…TCML. Histidine 259 is modified (phosphohistidine; by autocatalysis). The 91-residue stretch at 360 to 450 folds into the Histidine kinase domain; it reads LYRVAQEAFN…TLTAMMPKSA (91 aa).

It is found in the cell membrane. The catalysed reaction is ATP + protein L-histidine = ADP + protein N-phospho-L-histidine.. Functionally, member of the two-component regulatory system MctS/MctR, which activates mctP expression. The sequence is that of Sensor histidine kinase MctS from Rhizobium johnstonii (strain DSM 114642 / LMG 32736 / 3841) (Rhizobium leguminosarum bv. viciae).